A 310-amino-acid chain; its full sequence is 4-hydroxyproline 2-epimerase (310 aa).

Catalysis depends on Cys-85, which acts as the Proton acceptor. Residues 86–87, His-205, and Asp-231 each bind substrate; that span reads GH. The Proton donor role is filled by Cys-235. Substrate is bound at residue 236 to 237; that stretch reads GT.

This sequence belongs to the proline racemase family.

It catalyses the reaction trans-4-hydroxy-L-proline = cis-4-hydroxy-D-proline. Its function is as follows. Catalyzes the epimerization of trans-4-hydroxy-L-proline (t4LHyp) to cis-4-hydroxy-D-proline (c4DHyp). May be involved in a degradation pathway of t4LHyp, which would allow L.aggregata to grow on t4LHyp as a sole carbon source. Displays no proline racemase activity. This chain is 4-hydroxyproline 2-epimerase, found in Roseibium aggregatum (strain ATCC 25650 / DSM 13394 / JCM 20685 / NBRC 16684 / NCIMB 2208 / IAM 12614 / B1) (Stappia aggregata).